The following is a 580-amino-acid chain: MRPFAYFERLSQAFHDYPSLSKILVVSTISGGGLIVYSEANPSYSNNGVETKTRKRKVVLLGTGWAGASFLKTLNNSSYEVQVISPRNYFAFTPLLPSVTCGTVEARSVVEPIRNIARKQNVEMSFLEAECFKIDPGSKKVYCRSKQGVNSKGKKEFDVDYDYLVIATGAQSNTFNIPGVEENCHFLKEVEDAQRIRSTVIDSFEKASLPGLNEQERKRMLHFVVVGGGPTGVEFASELHDFVNEDLVKLYPKAKNLVQITLLEAADHILTMFDKRITEFAEEKFTRDGIDVKLGSMVVKVNDKEISAKTKAGEVSTIPYGMIVWSTGIGTRPVIKDFMKQIGQGNRRALATDEWLRVEGCDNIYALGDCATINQRKVMEDIAAIFKKADKENSGTLTMKEFHEVMSDICDRYPQVELYLKSKGMHGITDLLKQAQAENGSNKSVELDIEELKSALCQVDSQVKLLPATGQVAAQQGTYLAKCFDRMEVCEKNPEGPIRIRGEGRHRFRPFRYRHLGQFAPLGGEQTAAQLPGDWVSIGHSSQWLWYSVYASKQVSWRTRVLVVSDWMRRFIFGRDSSRI.

Residues 1–38 (MRPFAYFERLSQAFHDYPSLSKILVVSTISGGGLIVYS) constitute a mitochondrion transit peptide. 57–87 (KVVLLGTGWAGASFLKTLNNSSYEVQVISPR) is an FAD binding site. 221-257 (LHFVVVGGGPTGVEFASELHDFVNEDLVKLYPKAKNL) lines the NAD(+) pocket. Positions 377-412 (KVMEDIAAIFKKADKENSGTLTMKEFHEVMSDICDR) constitute an EF-hand domain. Ca(2+)-binding residues include aspartate 390, serine 394, threonine 396, and glutamate 401. The Microbody targeting signal signature appears at 571 to 580 (FIFGRDSSRI).

It belongs to the NADH dehydrogenase family. FAD serves as cofactor. As to expression, expressed at low levels in seedlings, roots, stems, buds and flowers and, to a lower extent, in leaves and cotyledons.

It is found in the mitochondrion inner membrane. Its subcellular location is the peroxisome. The catalysed reaction is a quinone + NADH + H(+) = a quinol + NAD(+). It carries out the reaction a ubiquinone + NADH + H(+) = a ubiquinol + NAD(+). Functionally, alternative NADH-ubiquinone oxidoreductase which catalyzes the oxidation of mitochondrial NADH does not translocate protons across the inner mitochondrial membrane. The polypeptide is External alternative NAD(P)H-ubiquinone oxidoreductase B3, mitochondrial (NDB3) (Arabidopsis thaliana (Mouse-ear cress)).